A 207-amino-acid chain; its full sequence is Riboflavin synthase (207 aa).

Lumazine-binding repeat units follow at residues 1–94 and 95–191; these read MFTG…LGGH and IVQG…INYL. 2,4-dihydroxypteridine is bound by residues 4 to 6, 45 to 47, 59 to 64, 98 to 100, Lys133, 142 to 144, and 156 to 161; these read GLV, CLT, DVSPET, GHV, SLT, and NIIPHT.

In terms of assembly, homotrimer.

It catalyses the reaction 2 6,7-dimethyl-8-(1-D-ribityl)lumazine + H(+) = 5-amino-6-(D-ribitylamino)uracil + riboflavin. It participates in cofactor biosynthesis; riboflavin biosynthesis; riboflavin from 2-hydroxy-3-oxobutyl phosphate and 5-amino-6-(D-ribitylamino)uracil: step 2/2. Catalyzes the dismutation of two molecules of 6,7-dimethyl-8-ribityllumazine, resulting in the formation of riboflavin and 5-amino-6-(D-ribitylamino)uracil. This chain is Riboflavin synthase (ribE), found in Aquifex aeolicus (strain VF5).